The primary structure comprises 631 residues: 1-deoxy-D-xylulose-5-phosphate synthase (631 aa).

Residues H73 and 114-116 contribute to the thiamine diphosphate site; that span reads GHS. D145 contributes to the Mg(2+) binding site. Thiamine diphosphate contacts are provided by residues 146 to 147, N174, Y285, and E366; that span reads GA. Mg(2+) is bound at residue N174.

This sequence belongs to the transketolase family. DXPS subfamily. Homodimer. The cofactor is Mg(2+). Thiamine diphosphate serves as cofactor.

It catalyses the reaction D-glyceraldehyde 3-phosphate + pyruvate + H(+) = 1-deoxy-D-xylulose 5-phosphate + CO2. Its pathway is metabolic intermediate biosynthesis; 1-deoxy-D-xylulose 5-phosphate biosynthesis; 1-deoxy-D-xylulose 5-phosphate from D-glyceraldehyde 3-phosphate and pyruvate: step 1/1. In terms of biological role, catalyzes the acyloin condensation reaction between C atoms 2 and 3 of pyruvate and glyceraldehyde 3-phosphate to yield 1-deoxy-D-xylulose-5-phosphate (DXP). This chain is 1-deoxy-D-xylulose-5-phosphate synthase, found in Desulfitobacterium hafniense (strain Y51).